Consider the following 248-residue polypeptide: Adenosylcobinamide-GDP ribazoletransferase (248 aa).

The next 8 membrane-spanning stretches (helical) occupy residues 24-44 (EVNLKKGSALLPFVGLIIGAW), 47-67 (LVFTLVALVMPLPVAIIAGLF), 70-90 (IIITGGFHVDALADTADGLFS), 106-126 (VGANGVIAICFYFLFYGALFL), 134-154 (IGWLFFVLPIVAKGVTMLLFA), 165-185 (LGSIFLGVPWWPIAISQLFVL), 186-206 (FILGLVFSYIGLLAYAGVILF), and 228-248 (AGGQMGQLVCLFCLVLVWGLI).

Belongs to the CobS family. Mg(2+) serves as cofactor.

Its subcellular location is the cell membrane. It carries out the reaction alpha-ribazole + adenosylcob(III)inamide-GDP = adenosylcob(III)alamin + GMP + H(+). It catalyses the reaction alpha-ribazole 5'-phosphate + adenosylcob(III)inamide-GDP = adenosylcob(III)alamin 5'-phosphate + GMP + H(+). Its pathway is cofactor biosynthesis; adenosylcobalamin biosynthesis; adenosylcobalamin from cob(II)yrinate a,c-diamide: step 7/7. Functionally, joins adenosylcobinamide-GDP and alpha-ribazole to generate adenosylcobalamin (Ado-cobalamin). Also synthesizes adenosylcobalamin 5'-phosphate from adenosylcobinamide-GDP and alpha-ribazole 5'-phosphate. The protein is Adenosylcobinamide-GDP ribazoletransferase of Listeria welshimeri serovar 6b (strain ATCC 35897 / DSM 20650 / CCUG 15529 / CIP 8149 / NCTC 11857 / SLCC 5334 / V8).